A 258-amino-acid chain; its full sequence is Ubiquinone/menaquinone biosynthesis C-methyltransferase UbiE (258 aa).

Residues threonine 81, aspartate 102, and 130-131 (NA) contribute to the S-adenosyl-L-methionine site.

The protein belongs to the class I-like SAM-binding methyltransferase superfamily. MenG/UbiE family.

The enzyme catalyses a 2-demethylmenaquinol + S-adenosyl-L-methionine = a menaquinol + S-adenosyl-L-homocysteine + H(+). It carries out the reaction a 2-methoxy-6-(all-trans-polyprenyl)benzene-1,4-diol + S-adenosyl-L-methionine = a 5-methoxy-2-methyl-3-(all-trans-polyprenyl)benzene-1,4-diol + S-adenosyl-L-homocysteine + H(+). Its pathway is quinol/quinone metabolism; menaquinone biosynthesis; menaquinol from 1,4-dihydroxy-2-naphthoate: step 2/2. It functions in the pathway cofactor biosynthesis; ubiquinone biosynthesis. Functionally, methyltransferase required for the conversion of demethylmenaquinol (DMKH2) to menaquinol (MKH2) and the conversion of 2-polyprenyl-6-methoxy-1,4-benzoquinol (DDMQH2) to 2-polyprenyl-3-methyl-6-methoxy-1,4-benzoquinol (DMQH2). The polypeptide is Ubiquinone/menaquinone biosynthesis C-methyltransferase UbiE (Rhizobium meliloti (strain 1021) (Ensifer meliloti)).